The chain runs to 404 residues: Multidrug resistance protein MdtG (404 aa).

11 helical membrane passes run 19 to 39, 56 to 76, 90 to 110, 113 to 133, 144 to 164, 171 to 191, 222 to 242, 254 to 274, 288 to 308, 317 to 337, and 376 to 396; these read LGCF…PLYV, LVFS…GGLA, LGMA…QFLI, ALLG…ATQV, TLST…GLLA, PVFF…FFFI, LFVT…ILTL, IAFI…LSAP, ILIV…FVQT, FLLG…LVYN, and AVFC…WNSL.

The protein belongs to the major facilitator superfamily. DHA1 family. MdtG (TC 2.A.1.2.20) subfamily.

The protein localises to the cell inner membrane. This is Multidrug resistance protein MdtG from Salmonella choleraesuis (strain SC-B67).